Reading from the N-terminus, the 616-residue chain is Large subunit GTPase 1 (616 aa).

Positions 161-359 constitute a CP-type G domain; sequence WRQLWRVIER…LLDCPGLVFP (199 aa). 209 to 212 is a binding site for GTP; sequence NKAD. A disordered region spans residues 247 to 269; that stretch reads RGEDLETYESTSSNEIPESLQAD. GTP contacts are provided by residues 308-315 and 352-355; these read GYPNVGKS and DCPG. Disordered regions lie at residues 552–574 and 587–616; these read RLND…SRRK and PEAL…IDDY. The span at 595 to 607 shows a compositional bias: basic residues; sequence SKKHNKKNKRSKQ.

It belongs to the TRAFAC class YlqF/YawG GTPase family. LSG1 subfamily.

The protein localises to the cytoplasm. In terms of biological role, GTPase required for the nuclear export of the 60S ribosomal subunit. Acts by mediating the release of nmd3 from the 60S ribosomal subunit after export into the cytoplasm. This is Large subunit GTPase 1 (lsg1) from Schizosaccharomyces pombe (strain 972 / ATCC 24843) (Fission yeast).